Reading from the N-terminus, the 464-residue chain is L-cystine uptake protein TcyP (464 aa).

The next 10 membrane-spanning stretches (helical) occupy residues 3-23 (TLLV…LYYM), 34-54 (VFTA…IYEP), 73-93 (YVKL…ISAF), 107-127 (GLII…GIAA), 184-204 (PTST…FIGV), 225-245 (IVMR…LALM), 263-283 (FVLA…LLIA), 347-367 (AGIY…IDPL), 371-391 (FILT…GVGG), and 395-415 (FAAL…ALVI).

It belongs to the dicarboxylate/amino acid:cation symporter (DAACS) (TC 2.A.23) family.

Its subcellular location is the membrane. Mediates uptake of L-cystine, the oxidized form of L-cysteine. In Bacillus cereus (strain ATCC 10987 / NRS 248), this protein is L-cystine uptake protein TcyP.